The following is a 498-amino-acid chain: Dynein regulatory complex subunit 5 (498 aa).

2 disordered regions span residues 27–52 and 200–223; these read ALGSSSTGPTSLKTSSTPTPGQLKTK and MPTPLQGEEQSDSGSEGEGSEPEK. Low complexity predominate over residues 28–47; sequence LGSSSTGPTSLKTSSTPTPG. LRR repeat units follow at residues 276–299, 306–327, 333–353, 361–382, 389–409, and 417–438; these read CHTLKIFKLTRSKVDDDKARILIR, ALEELDLSHNLIGDRGARAAAK, RLRVLNLANNQLQAPGAQSLA, NLVFLNLRLNCIEDEGGQAIAH, CLSVLHLGGNKLSEPTATLLS, and TLVSLNLSCNHIGQDGGKQLLE.

This sequence belongs to the DRC5 family. Component of the nexin-dynein regulatory complex (N-DRC). Interacts with DRC1. Interacts with FBXL13/DRC6, DRC3 and DRC7. In terms of tissue distribution, testis-specific (at protein level).

The protein localises to the cell projection. The protein resides in the cilium. It is found in the flagellum. Its subcellular location is the cytoplasm. It localises to the cytoskeleton. The protein localises to the flagellum axoneme. Component of the nexin-dynein regulatory complex (N-DRC) a key regulator of ciliary/flagellar motility which maintains the alignment and integrity of the distal axoneme and regulates microtubule sliding in motile axonemes. May play a role in the assembly of N-DRC. Required for sperm motility. The polypeptide is Dynein regulatory complex subunit 5 (Tcte1) (Mus musculus (Mouse)).